Reading from the N-terminus, the 440-residue chain is Eukaryotic translation initiation factor 3 subunit E (440 aa).

Positions 219–392 (VYFNYPKGRD…GQVVMGAKTT (174 aa)) constitute a PCI domain.

This sequence belongs to the eIF-3 subunit E family. Component of the eukaryotic translation initiation factor 3 (eIF-3) complex.

It is found in the cytoplasm. Functionally, component of the eukaryotic translation initiation factor 3 (eIF-3) complex, which is involved in protein synthesis of a specialized repertoire of mRNAs and, together with other initiation factors, stimulates binding of mRNA and methionyl-tRNAi to the 40S ribosome. The eIF-3 complex specifically targets and initiates translation of a subset of mRNAs involved in cell proliferation. The chain is Eukaryotic translation initiation factor 3 subunit E from Brugia malayi (Filarial nematode worm).